The chain runs to 206 residues: Probable glutathione S-transferase 9 (206 aa).

Residues 2–79 (VSYKLIYFQS…YLSKQFGISG (78 aa)) enclose the GST N-terminal domain. Residues Y8, W39, K43, 49-51 (GQV), and 63-64 (QS) contribute to the glutathione site. The GST C-terminal domain occupies 81–206 (SSWEEAQVDA…WIEKRPVTSR (126 aa)).

This sequence belongs to the GST superfamily. Sigma family.

The catalysed reaction is RX + glutathione = an S-substituted glutathione + a halide anion + H(+). In terms of biological role, conjugation of reduced glutathione to a wide number of exogenous and endogenous hydrophobic electrophiles. This Caenorhabditis elegans protein is Probable glutathione S-transferase 9 (gst-9).